Here is a 93-residue protein sequence, read N- to C-terminus: uncharacterized protein (93 aa).

3 helical membrane passes run 9–29 (ITVIGYIAGTLTTFASLPQLI), 40–60 (ISLAFVITFTTGLTLWLIYGI), and 66–86 (PIIVFNILSLMFWIPITYLKI).

Its subcellular location is the cell membrane. This is an uncharacterized protein from Methanocaldococcus jannaschii (strain ATCC 43067 / DSM 2661 / JAL-1 / JCM 10045 / NBRC 100440) (Methanococcus jannaschii).